We begin with the raw amino-acid sequence, 511 residues long: GMP synthase [glutamine-hydrolyzing] (511 aa).

The 191-residue stretch at Asp-5 to Thr-195 folds into the Glutamine amidotransferase type-1 domain. Cys-82 functions as the Nucleophile in the catalytic mechanism. Active-site residues include His-169 and Glu-171. One can recognise a GMPS ATP-PPase domain in the interval Trp-196–Arg-386. Position 223 to 229 (Ser-223 to Ser-229) interacts with ATP.

Homodimer.

The catalysed reaction is XMP + L-glutamine + ATP + H2O = GMP + L-glutamate + AMP + diphosphate + 2 H(+). It participates in purine metabolism; GMP biosynthesis; GMP from XMP (L-Gln route): step 1/1. Catalyzes the synthesis of GMP from XMP. The polypeptide is GMP synthase [glutamine-hydrolyzing] (Campylobacter hominis (strain ATCC BAA-381 / DSM 21671 / CCUG 45161 / LMG 19568 / NCTC 13146 / CH001A)).